Reading from the N-terminus, the 140-residue chain is Lymphocyte antigen 6H (140 aa).

The N-terminal stretch at 1 to 25 (MLPAAMKGLGLVLLAALLCSSPAHG) is a signal peptide. Residues 26-91 (LWCQDCTLTT…RHFFSDYLMG (66 aa)) enclose the UPAR/Ly6 domain. Intrachain disulfides connect cysteine 28/cysteine 52, cysteine 31/cysteine 40, cysteine 45/cysteine 73, cysteine 77/cysteine 104, and cysteine 105/cysteine 110. An N-linked (GlcNAc...) asparagine glycan is attached at asparagine 36.

The protein localises to the cell membrane. This Bos taurus (Bovine) protein is Lymphocyte antigen 6H (LY6H).